We begin with the raw amino-acid sequence, 322 residues long: Glucokinase (322 aa).

Glycine 10–threonine 15 is a binding site for ATP.

Belongs to the bacterial glucokinase family.

It is found in the cytoplasm. It carries out the reaction D-glucose + ATP = D-glucose 6-phosphate + ADP + H(+). The polypeptide is Glucokinase (Hahella chejuensis (strain KCTC 2396)).